A 701-amino-acid chain; its full sequence is Elongation factor G (701 aa).

The region spanning alanine 10–leucine 290 is the tr-type G domain. Residues alanine 19 to threonine 26, aspartate 83 to histidine 87, and asparagine 137 to aspartate 140 each bind GTP.

Belongs to the TRAFAC class translation factor GTPase superfamily. Classic translation factor GTPase family. EF-G/EF-2 subfamily.

It localises to the cytoplasm. Its function is as follows. Catalyzes the GTP-dependent ribosomal translocation step during translation elongation. During this step, the ribosome changes from the pre-translocational (PRE) to the post-translocational (POST) state as the newly formed A-site-bound peptidyl-tRNA and P-site-bound deacylated tRNA move to the P and E sites, respectively. Catalyzes the coordinated movement of the two tRNA molecules, the mRNA and conformational changes in the ribosome. This is Elongation factor G from Tropheryma whipplei (strain Twist) (Whipple's bacillus).